A 340-amino-acid polypeptide reads, in one-letter code: Ribosomal RNA small subunit methyltransferase C (340 aa).

It belongs to the methyltransferase superfamily. RsmC family. Monomer.

The protein resides in the cytoplasm. The enzyme catalyses guanosine(1207) in 16S rRNA + S-adenosyl-L-methionine = N(2)-methylguanosine(1207) in 16S rRNA + S-adenosyl-L-homocysteine + H(+). Functionally, specifically methylates the guanine in position 1207 of 16S rRNA in the 30S particle. In Vibrio vulnificus (strain CMCP6), this protein is Ribosomal RNA small subunit methyltransferase C.